The chain runs to 286 residues: Shikimate dehydrogenase (NADP(+)) (286 aa).

Residues S22 to S24 and T71 contribute to the shikimate site. Residue K75 is the Proton acceptor of the active site. E87 contributes to the NADP(+) binding site. The shikimate site is built by N96 and D111. Residues G136 to A140, N160 to R165, and I225 contribute to the NADP(+) site. A shikimate-binding site is contributed by Y227. Residue G248 coordinates NADP(+).

This sequence belongs to the shikimate dehydrogenase family. Homodimer.

It catalyses the reaction shikimate + NADP(+) = 3-dehydroshikimate + NADPH + H(+). Its pathway is metabolic intermediate biosynthesis; chorismate biosynthesis; chorismate from D-erythrose 4-phosphate and phosphoenolpyruvate: step 4/7. Its function is as follows. Involved in the biosynthesis of the chorismate, which leads to the biosynthesis of aromatic amino acids. Catalyzes the reversible NADPH linked reduction of 3-dehydroshikimate (DHSA) to yield shikimate (SA). This is Shikimate dehydrogenase (NADP(+)) from Rhizobium meliloti (strain 1021) (Ensifer meliloti).